Here is a 193-residue protein sequence, read N- to C-terminus: ATP-dependent Clp protease proteolytic subunit 2 (193 aa).

S98 (nucleophile) is an active-site residue. The active site involves H123.

It belongs to the peptidase S14 family. Fourteen ClpP subunits assemble into 2 heptameric rings which stack back to back to give a disk-like structure with a central cavity, resembling the structure of eukaryotic proteasomes.

The protein localises to the cytoplasm. The enzyme catalyses Hydrolysis of proteins to small peptides in the presence of ATP and magnesium. alpha-casein is the usual test substrate. In the absence of ATP, only oligopeptides shorter than five residues are hydrolyzed (such as succinyl-Leu-Tyr-|-NHMec, and Leu-Tyr-Leu-|-Tyr-Trp, in which cleavage of the -Tyr-|-Leu- and -Tyr-|-Trp bonds also occurs).. Functionally, cleaves peptides in various proteins in a process that requires ATP hydrolysis. Has a chymotrypsin-like activity. Plays a major role in the degradation of misfolded proteins. This is ATP-dependent Clp protease proteolytic subunit 2 from Bacillus cereus (strain ATCC 10987 / NRS 248).